The primary structure comprises 748 residues: Cytosolic phospholipase A2 (748 aa).

Residues 1 to 178 (MSFIDPYQHI…MRKLLGPKKS (178 aa)) form a phospholipid binding region. S2 carries the post-translational modification Phosphoserine. In terms of domain architecture, C2 spans 6 to 122 (PYQHIIVEHQ…KVGEKKEVPF (117 aa)). Residues D40, T41, D43, N65, D93, A94, and N95 each coordinate Ca(2+). The PLA2c domain occupies 138 to 739 (VCSSPDLRFS…SNVEARRFFN (602 aa)). The active-site Nucleophile is the S228. At T268 the chain carries Phosphothreonine. Residues 428 to 458 (HIVSNDSSDSDDESQEPKGTEGEDAEREYQN) are disordered. A phosphoserine mark is found at S434, S435, and S437. Basic and acidic residues predominate over residues 442 to 458 (QEPKGTEGEDAEREYQN). At S505 the chain carries Phosphoserine; by MAPK. S514 is modified (phosphoserine). Residue K540 forms a Glycyl lysine isopeptide (Lys-Gly) (interchain with G-Cter in SUMO2) linkage. D548 serves as the catalytic Proton acceptor. K605 participates in a covalent cross-link: Glycyl lysine isopeptide (Lys-Gly) (interchain with G-Cter in SUMO2). A phosphoserine mark is found at S726 and S728.

Interacts with KAT5. In terms of processing, phosphorylated at both Ser-505 and Ser-726 in response to mitogenic stimuli.

It is found in the cytoplasm. Its subcellular location is the golgi apparatus membrane. The protein localises to the nucleus envelope. The enzyme catalyses a 1,2-diacyl-sn-glycero-3-phosphocholine + H2O = a 1-acyl-sn-glycero-3-phosphocholine + a fatty acid + H(+). The catalysed reaction is a 1-O-alkyl-2-acyl-sn-glycero-3-phosphocholine + H2O = a 1-O-alkyl-sn-glycero-3-phosphocholine + a fatty acid + H(+). It catalyses the reaction a 1-acyl-sn-glycero-3-phosphocholine + H2O = sn-glycerol 3-phosphocholine + a fatty acid + H(+). It carries out the reaction 1-hexadecanoyl-2-(5Z,8Z,11Z,14Z-eicosatetraenoyl)-sn-glycero-3-phosphocholine + H2O = 1-hexadecanoyl-sn-glycero-3-phosphocholine + (5Z,8Z,11Z,14Z)-eicosatetraenoate + H(+). The enzyme catalyses 1,2-di-(5Z,8Z,11Z,14Z-eicosatetraenoyl)-sn-glycero-3-phosphocholine + H2O = 1-(5Z,8Z,11Z,14Z-eicosatetraenoyl)-sn-glycero-3-phosphocholine + (5Z,8Z,11Z,14Z)-eicosatetraenoate + H(+). The catalysed reaction is 1-octadecanoyl-2-(5Z,8Z,11Z,14Z-eicosatetraenoyl)-sn-glycero-3-phosphocholine + H2O = 1-octadecanoyl-sn-glycero-3-phosphocholine + (5Z,8Z,11Z,14Z)-eicosatetraenoate + H(+). It catalyses the reaction 1-hexadecanoyl-2-(9Z,12Z-octadecadienoyl)-sn-glycero-3-phosphocholine + H2O = (9Z,12Z)-octadecadienoate + 1-hexadecanoyl-sn-glycero-3-phosphocholine + H(+). It carries out the reaction 1-octadecanoyl-2-(9Z,12Z,15Z-octadecatrienoyl)-sn-glycero-3-phosphocholine + H2O = (9Z,12Z,15Z)-octadecatrienoate + 1-octadecanoyl-sn-glycero-3-phosphocholine + H(+). The enzyme catalyses 1-(5Z,8Z,11Z,14Z-eicosatetraenoyl)-2-hexadecanoyl-sn-glycero-3-phosphocholine + H2O = 1-(5Z,8Z,11Z,14Z-eicosatetraenoyl)-sn-glycero-3-phosphocholine + hexadecanoate + H(+). The catalysed reaction is 1-O-hexadecyl-2-(5Z,8Z,11Z,14Z)-eicosatetraenoyl-sn-glycero-3-phosphocholine + H2O = 1-O-hexadecyl-sn-glycero-3-phosphocholine + (5Z,8Z,11Z,14Z)-eicosatetraenoate + H(+). It catalyses the reaction 1,2-di-(9Z-octadecenoyl)-sn-glycero-3-phospho-(1'-sn-glycerol) + H2O = 1-(9Z-octadecenoyl)-sn-glycero-3-phospho-(1'-sn-glycerol) + (9Z)-octadecenoate + H(+). It carries out the reaction 1-octadecanoyl-2-(5Z,8Z,11Z,14Z-eicosatetraenoyl)-sn-glycero-3-phosphate + H2O = 1-octadecanoyl-sn-glycero-3-phosphate + (5Z,8Z,11Z,14Z)-eicosatetraenoate + H(+). The enzyme catalyses 1-hexadecanoyl-sn-glycero-3-phosphocholine + H2O = sn-glycerol 3-phosphocholine + hexadecanoate + H(+). The catalysed reaction is 2-(prostaglandin E2)-sn-glycero-3-phosphoethanolamine + H2O = sn-glycero-3-phosphoethanolamine + prostaglandin E2 + H(+). It catalyses the reaction 2-[(15S)-hydroxy-(5Z,8Z,11Z,13E)-eicosatetraenoyl]-sn-glycero-3-phosphocholine + H2O = (15S)-hydroxy-(5Z,8Z,11Z,13E)-eicosatetraenoate + sn-glycerol 3-phosphocholine + H(+). It carries out the reaction 2-[(15R)-hydroxy-(5Z,8Z,11Z,13E)-eicosatetraenoyl]-sn-glycero-3-phosphocholine + H2O = (15R)-hydroxy-(5Z,8Z,11Z,13E)-eicosatetraenoate + sn-glycerol 3-phosphocholine + H(+). The enzyme catalyses 2-(prostaglandin E2)-sn-glycero-3-phosphocholine + H2O = prostaglandin E2 + sn-glycerol 3-phosphocholine + H(+). The catalysed reaction is 2-[(11R)-hydroxy-(5Z,8Z,12E,14Z)-eicosatetraenoyl]-sn-glycero-3-phosphocholine + H2O = (11R)-hydroxy-(5Z,8Z,12E,14Z)-eicosatetraenoate + sn-glycerol 3-phosphocholine + H(+). It catalyses the reaction 1-(5Z,8Z,11Z,14Z-eicosatetraenoyl)-2-O-hexadecyl-sn-glycero-3-phosphocholine + H2O = 2-O-hexadecyl-sn-glycero-3-phosphocholine + (5Z,8Z,11Z,14Z)-eicosatetraenoate + H(+). It carries out the reaction 1-octadecanoyl-2-(5Z,8Z,11Z,14Z-eicosatetraenoyl)-sn-glycero-3-phosphocholine + glycerol = 1-(5Z,8Z,11Z,14Z-eicosatetraenoyl)-glycerol + 1-octadecanoyl-sn-glycero-3-phosphocholine. The enzyme catalyses 1-octadecanoyl-2-(9Z,12Z,15Z-octadecatrienoyl)-sn-glycero-3-phosphocholine + glycerol = 1-(9Z,12Z,15Z-octadecatrienoyl)-glycerol + 1-octadecanoyl-sn-glycero-3-phosphocholine. The protein operates within membrane lipid metabolism; glycerophospholipid metabolism. It functions in the pathway lipid metabolism; arachidonate metabolism. Its pathway is lipid metabolism; prostaglandin biosynthesis. It participates in lipid metabolism; leukotriene B4 biosynthesis. Activated by cytosolic calcium, which is necessary for binding to membrane lipids. Activated by phosphorylation in response to mitogenic stimuli. Has primarily calcium-dependent phospholipase and lysophospholipase activities, with a major role in membrane lipid remodeling and biosynthesis of lipid mediators of the inflammatory response. Plays an important role in embryo implantation and parturition through its ability to trigger prostanoid production. Preferentially hydrolyzes the ester bond of the fatty acyl group attached at sn-2 position of phospholipids (phospholipase A2 activity). Selectively hydrolyzes sn-2 arachidonoyl group from membrane phospholipids, providing the precursor for eicosanoid biosynthesis via the cyclooxygenase pathway. In an alternative pathway of eicosanoid biosynthesis, hydrolyzes sn-2 fatty acyl chain of eicosanoid lysophopholipids to release free bioactive eicosanoids. Hydrolyzes the ester bond of the fatty acyl group attached at sn-1 position of phospholipids (phospholipase A1 activity) only if an ether linkage rather than an ester linkage is present at the sn-2 position. This hydrolysis is not stereospecific. Has calcium-independent phospholipase A2 and lysophospholipase activities in the presence of phosphoinositides. Has O-acyltransferase activity. Catalyzes the transfer of fatty acyl chains from phospholipids to a primary hydroxyl group of glycerol (sn-1 or sn-3), potentially contributing to monoacylglycerol synthesis. The protein is Cytosolic phospholipase A2 (PLA2G4A) of Oryctolagus cuniculus (Rabbit).